The sequence spans 265 residues: GTP cyclohydrolase FolE2 (265 aa).

Belongs to the GTP cyclohydrolase IV family.

The enzyme catalyses GTP + H2O = 7,8-dihydroneopterin 3'-triphosphate + formate + H(+). It participates in cofactor biosynthesis; 7,8-dihydroneopterin triphosphate biosynthesis; 7,8-dihydroneopterin triphosphate from GTP: step 1/1. Functionally, converts GTP to 7,8-dihydroneopterin triphosphate. The sequence is that of GTP cyclohydrolase FolE2 from Bordetella avium (strain 197N).